The primary structure comprises 164 residues: MTLHTPSTDAPLARRLLQLGIALFLLGLLTGFLLPMMANPRVGLSSHLEGVLNGMFLLALGLMWPQLSLGTGARKAAFGFAVYGTYANWLATLLAGFWGAGGRMMPIAAGGHTGTAAQEGLIAFALISLSLSMLVVCALALWGLRSAPARRNTDAPAAGPQPAA.

4 helical membrane-spanning segments follow: residues 16–36 (LLQL…LLPM), 50–70 (GVLN…LSLG), 78–98 (FGFA…AGFW), and 121–141 (LIAF…ALAL).

It is found in the cell membrane. The catalysed reaction is N-phenylhydroxylamine = 2-aminophenol. Its activity is regulated as follows. Addition of ZnSO(4) decreases the activity to 70%. In terms of biological role, catalyzes the rearrangement of hydroxylaminobenzene to 2-aminophenol. This is Hydroxylaminobenzene mutase HabB (habB) from Ectopseudomonas oleovorans (Pseudomonas oleovorans).